A 507-amino-acid polypeptide reads, in one-letter code: Natural resistance-associated macrophage protein 1 (507 aa).

A disordered region spans residues 1–36 (MIRDKNPQRVNRPSYGSISSLPSPAPQPEPSRNTYL). The Cytoplasmic segment spans residues 1–39 (MIRDKNPQRVNRPSYGSISSLPSPAPQPEPSRNTYLSEK). Polar residues predominate over residues 8-22 (QRVNRPSYGSISSLP). The chain crosses the membrane as a helical span at residues 40–60 (IPIPSTEQLLWVLLWATVLGL). At 61 to 123 (LCQRLAARLG…ISFNLLSAGR (63 aa)) the chain is on the extracellular side. A helical membrane pass occupies residues 124 to 144 (IPLWGGVLITIVDTFFFLFLD). Residues 145–152 (NYGLRKLE) lie on the Cytoplasmic side of the membrane. A helical membrane pass occupies residues 153–173 (AFFGFLVTIMALTFGYEYVVA). At 174–199 (RPSQGALLKGLFLPSCPGCGQPELLQ) the chain is on the extracellular side. Residues 200–220 (AVGIVGAIIMPHNIYLHSALV) form a helical membrane-spanning segment. The Cytoplasmic segment spans residues 221-245 (KSREVDRTRRGDVREANMYFLTEAT). Residues 246–266 (IALFVSFIINLFVMAVFGQAF) form a helical membrane-spanning segment. At 267-305 (YQQTNEEAFNICANSSLHNYAKIFPRDNNTVSVDIYQGG) the chain is on the extracellular side. N-linked (GlcNAc...) asparagine glycans are attached at residues N280 and N294. A helical membrane pass occupies residues 306–326 (VILGCLFGPAALYIWAVGLLA). Topologically, residues 327–353 (AGQSSTMTGTYAGQFVMEGFLKLRWSR) are cytoplasmic. Residues 354-374 (FARVLLTRSCAILPTVLVAVF) form a helical membrane-spanning segment. Residues 375–391 (RDLRDLSGLNDLLNVLQ) lie on the Extracellular side of the membrane. Residues 392 to 412 (SLLLPFAVLPILTFTSMPAVM) form a helical membrane-spanning segment. At 413–422 (QEFANGWLSK) the chain is on the cytoplasmic side. The helical transmembrane segment at 423–443 (VITSCIMALVCAINLYFVISY) threads the bilayer. The Extracellular portion of the chain corresponds to 444 to 451 (LPSLPHPA). A helical membrane pass occupies residues 452–472 (YFGLVALLAIGYLGLTAYLAW). Residues 473–507 (TCCIAHGAKFLTHSSHQRFLYGLPIEEQEGREGSG) are Cytoplasmic-facing.

This sequence belongs to the NRAMP family.

The protein localises to the late endosome membrane. The protein resides in the lysosome membrane. The enzyme catalyses Zn(2+)(in) + H(+)(out) = Zn(2+)(out) + H(+)(in). The catalysed reaction is Fe(2+)(in) + H(+)(out) = Fe(2+)(out) + H(+)(in). It catalyses the reaction Mn(2+)(in) + H(+)(out) = Mn(2+)(out) + H(+)(in). In terms of biological role, macrophage-specific antiporter that fluxes metal ions in either direction against a proton gradient. Localized to late endosomal lysosomal membranes, delivers bivalent cations from the cytosol into these acidic compartments where they may directly affect antimicrobial activity. Involved in iron metabolism and host natural resistance to infection with intracellular parasites. Pathogen resistance involves sequestration of Fe(2+) and Mn(2+), cofactors of both prokaryotic and eukaryotic catalases and superoxide dismutases, not only to protect the macrophage against its own generation of reactive oxygen species, but to deny the cations to the pathogen for synthesis of its protective enzymes. This Rattus norvegicus (Rat) protein is Natural resistance-associated macrophage protein 1 (Slc11a1).